The sequence spans 656 residues: MLRKQTPGRARPADVEAVAAVSALGKVMNQDGTALDHSKVRKRESMLPTRGRSGRGGVRRASAESAGRRTRSEDGKAARSARERHMEDEFNAFGGRATAGVAKEVPARGGADDGPVMTTKYVPSPRGLVKVTVPVSAGSSAHSSLRKSASIHTGMNMRHGSGSRRASMTSAGSDAARRQAKSTAESSSARTRSNKPKPRPSGDSHSPSPTTRAPVTPRRTTVKDLVAPPLPEEPEDSVSTSGKGESIVPLNEKEEEQDEQPFDSEANARSSPKTPKQGGHVPALEVSQHGFQTPVPDGPTMAEYLQSADPILSAGATQRQRELEEAEAASTTPDGDRLKIGKSPSPMKSAMKNSPSAGTSKYNRPPLDTSSAADGAYLSLTTAENTRLNAQLSDDKMRKSPTLRQPKRRVSVHSPKTPSAASADRSSKVLRQFSLSKPQGRTLAMNKNNSGEKQAQSPTSPKSNQKKVDPSVLYPREPPKKKSSFERERPQHKNLGFKNLSLRSEASNEFMYQGTLEGEIHQSPGQHVGHETPKKALLSVTAEGWKSRFSDSDSENDSPPFSSNASGSTQPSSHRDSSLAHHGGFGLFKHKDHHGHKPKHSLGASLASAKPHEPQKARLAPTSNRGSNTLSAERPLKNHNSFSGKLKKLFGKKHAT.

Disordered regions lie at residues Met-28–Gly-95, Val-135–Gly-375, and Arg-387–Thr-656. Over residues Ala-66–Asp-88 the composition is skewed to basic and acidic residues. Low complexity-rich tracts occupy residues Ser-136–Ser-150, Ser-182–Thr-191, and Ser-206–Arg-219. The span at Lys-253–Phe-262 shows a compositional bias: acidic residues. Residues Met-351 to Ala-372 are compositionally biased toward polar residues. Residues Lys-399–Ser-411 show a composition bias toward basic residues. A compositionally biased stretch (polar residues) spans Phe-433 to Ser-463. The segment covering Glu-477–Gln-491 has biased composition (basic and acidic residues). Over residues Asp-557–Ser-572 the composition is skewed to polar residues. The segment covering Phe-588–His-600 has biased composition (basic residues). Residues Pro-621 to Ser-631 show a composition bias toward polar residues. Residues Lys-645–Thr-656 show a composition bias toward basic residues.

Belongs to the SEG1 family. As to quaternary structure, component of eisosomes, large cytoplasmic protein assemblies that localize to specialized domains termed MCCs on the plasma membrane.

The protein localises to the cell membrane. Important for the stabilization of eisosomes, large cytoplasmic protein assemblies that localize to specialized domains on the plasma membrane to cluster specific proteins at sites of membrane invaginations. This Eremothecium gossypii (strain ATCC 10895 / CBS 109.51 / FGSC 9923 / NRRL Y-1056) (Yeast) protein is Eisosome protein SEG1 (SEG1).